A 343-amino-acid polypeptide reads, in one-letter code: Glutamine synthetase (343 aa).

One can recognise a GS beta-grasp domain in the interval 3–87; it reads FKAEYIWIDG…CEVLNIDLTP (85 aa). The 252-residue stretch at 92-343 folds into the GS catalytic domain; that stretch reads TRAALAEVAE…CSALEKAGQV (252 aa). Mg(2+)-binding residues include Glu113, Glu115, Glu174, and Glu181. L-glutamate is bound at residue Glu279.

The protein belongs to the glutamine synthetase family. In terms of assembly, homooctamer and homotetramer. Requires Mg(2+) as cofactor.

The protein localises to the cytoplasm. The catalysed reaction is L-glutamate + NH4(+) + ATP = L-glutamine + ADP + phosphate + H(+). In terms of biological role, catalyzes the ATP-dependent biosynthesis of glutamine from glutamate and ammonia. The sequence is that of Glutamine synthetase from Streptomyces viridochromogenes.